We begin with the raw amino-acid sequence, 289 residues long: Pantothenate synthetase (289 aa).

Position 33–40 (33–40 (MGNLHDGH)) interacts with ATP. The active-site Proton donor is the H40. Residue Q64 coordinates (R)-pantoate. Beta-alanine is bound at residue Q64. ATP is bound at residue 155–158 (GKKD). A (R)-pantoate-binding site is contributed by Q161. Residues A184 and 192 to 195 (LSSR) contribute to the ATP site.

The protein belongs to the pantothenate synthetase family. Homodimer.

Its subcellular location is the cytoplasm. The catalysed reaction is (R)-pantoate + beta-alanine + ATP = (R)-pantothenate + AMP + diphosphate + H(+). The protein operates within cofactor biosynthesis; (R)-pantothenate biosynthesis; (R)-pantothenate from (R)-pantoate and beta-alanine: step 1/1. Its function is as follows. Catalyzes the condensation of pantoate with beta-alanine in an ATP-dependent reaction via a pantoyl-adenylate intermediate. The chain is Pantothenate synthetase from Acidovorax sp. (strain JS42).